The chain runs to 99 residues: MLIMNLQLFAHKKGVGSSKNGRDSESKRLGVKSTDGEFVLAGNIIVRQRGTKIHPGNNVGRGKDDTLFAKIDGVVKFERVGKDKKKASVYPVNVEAIAE.

The propeptide occupies 1 to 9 (MLIMNLQLF).

Belongs to the bacterial ribosomal protein bL27 family. The N-terminus is cleaved by ribosomal processing cysteine protease Prp.

This chain is Large ribosomal subunit protein bL27, found in Clostridium botulinum (strain Eklund 17B / Type B).